Here is a 267-residue protein sequence, read N- to C-terminus: Myeloid leukemia factor 1 (267 aa).

Residues S6, S8, S32, and S34 each carry the phosphoserine modification. The interval 39–67 (RDLLSISDGRGRTHNRRERDDGEDSLTHA) is disordered. Residues 50 to 125 (RTHNRRERDD…VGDEPPKVFQ (76 aa)) are interaction with COPS3.

This sequence belongs to the MLF family. As to quaternary structure, interacts with CENPU. Also interacts with NRBP1/MADM, YWHAZ/14-3-3-zeta and HNRPUL2/MANP. NRBP1 recruits a serine kinase which phosphorylates both itself and MLF1. Phosphorylated MLF1 then binds to YWHAZ and is retained in the cytoplasm. Retained in the nucleus by binding to HNRPUL2. Binds to COPS3/CSN3 which is required for suppression of COP1 and activation of p53. Phosphorylation is required for binding to YWHAZ. As to expression, highly expressed in skeletal muscle, heart, testis. Also found in lung, but not in spleen, thymus, bone marrow, liver and kidney.

It localises to the cytoplasm. The protein localises to the nucleus. It is found in the cell projection. Its subcellular location is the cilium. The protein resides in the cytoskeleton. It localises to the cilium basal body. In terms of biological role, involved in lineage commitment of primary hemopoietic progenitors by restricting erythroid formation and enhancing myeloid formation. Interferes with erythropoietin-induced erythroid terminal differentiation by preventing cells from exiting the cell cycle through suppression of CDKN1B/p27Kip1 levels. Suppresses COP1 activity via CSN3 which activates p53 and induces cell cycle arrest. Binds DNA and affects the expression of a number of genes so may function as a transcription factor in the nucleus. This is Myeloid leukemia factor 1 (Mlf1) from Mus musculus (Mouse).